A 229-amino-acid chain; its full sequence is Rhamnosyl O-methyltransferase (229 aa).

An N-terminal signal peptide occupies residues 1–23; it reads MERVRQMFSCVSGMIYRPTDSIA.

Belongs to the rhamnosyl O-methyltransferase family.

In terms of biological role, catalyzes the O-methylation of the hydroxyl group located on C-2 of the first rhamnosyl residue linked to the phenolic group of glycosylated phenolphthiocerol dimycocerosates (PGL) and p-hydroxybenzoic acid derivatives (p-HBAD). The sequence is that of Rhamnosyl O-methyltransferase from Mycobacterium leprae (strain TN).